A 901-amino-acid chain; its full sequence is Aconitate hydratase A (901 aa).

Cysteine 443, cysteine 509, and cysteine 512 together coordinate [4Fe-4S] cluster.

This sequence belongs to the aconitase/IPM isomerase family. In terms of assembly, monomer. [4Fe-4S] cluster is required as a cofactor.

The catalysed reaction is citrate = D-threo-isocitrate. It catalyses the reaction (2S,3R)-3-hydroxybutane-1,2,3-tricarboxylate = 2-methyl-cis-aconitate + H2O. The protein operates within carbohydrate metabolism; tricarboxylic acid cycle; isocitrate from oxaloacetate: step 2/2. It participates in organic acid metabolism; propanoate degradation. Its function is as follows. Involved in the catabolism of short chain fatty acids (SCFA) via the tricarboxylic acid (TCA)(acetyl degradation route) and probably the 2-methylcitrate cycle I (propionate degradation route). Catalyzes the reversible isomerization of citrate to isocitrate via cis-aconitate. Could catalyze the hydration of 2-methyl-cis-aconitate to yield (2R,3S)-2-methylisocitrate. The apo form of AcnA functions as a RNA-binding regulatory protein. This Staphylococcus epidermidis (strain ATCC 12228 / FDA PCI 1200) protein is Aconitate hydratase A (acnA).